Here is a 362-residue protein sequence, read N- to C-terminus: Chorismate synthase (362 aa).

Arg48 and Arg54 together coordinate NADP(+). Residues 131–133 (RSS), 243–244 (NA), Gly287, 302–306 (KPTSS), and Arg328 contribute to the FMN site.

The protein belongs to the chorismate synthase family. In terms of assembly, homotetramer. It depends on FMNH2 as a cofactor.

It catalyses the reaction 5-O-(1-carboxyvinyl)-3-phosphoshikimate = chorismate + phosphate. The protein operates within metabolic intermediate biosynthesis; chorismate biosynthesis; chorismate from D-erythrose 4-phosphate and phosphoenolpyruvate: step 7/7. Catalyzes the anti-1,4-elimination of the C-3 phosphate and the C-6 proR hydrogen from 5-enolpyruvylshikimate-3-phosphate (EPSP) to yield chorismate, which is the branch point compound that serves as the starting substrate for the three terminal pathways of aromatic amino acid biosynthesis. This reaction introduces a second double bond into the aromatic ring system. The chain is Chorismate synthase from Bradyrhizobium diazoefficiens (strain JCM 10833 / BCRC 13528 / IAM 13628 / NBRC 14792 / USDA 110).